The chain runs to 320 residues: Olfactory receptor 13C8 (320 aa).

The Extracellular segment spans residues 1–25 (MERTNDSTSTEFFLVGLSAHPKLQT). Residue N5 is glycosylated (N-linked (GlcNAc...) asparagine). The helical transmembrane segment at 26–46 (VFFVLILWMYLMILLGNGVLI) threads the bilayer. Residues 47 to 54 (SVIIFDSH) are Cytoplasmic-facing. A helical transmembrane segment spans residues 55–75 (LHTPMYFFLCNLSFLDVCYTS). The Extracellular portion of the chain corresponds to 76 to 99 (SSVPLILASFLAVKKKVSFSGCMV). A disulfide bond links C97 and C189. Residues 100–120 (QMFISFAMGATECMILGTMAL) traverse the membrane as a helical segment. The Cytoplasmic segment spans residues 121–139 (DRYVAICYPLRYPVIMSKG). Residues 140-160 (AYVAMAAGSWVTGLVDSVVQT) traverse the membrane as a helical segment. The Extracellular portion of the chain corresponds to 161 to 197 (AFAMQLPFCANNVIKHFVCEILAILKLACADISINVI). Residues 198–217 (SMTGSNLIVLVIPLLVISIS) form a helical membrane-spanning segment. At 218–237 (YIFIVATILRIPSTEGKHKA) the chain is on the cytoplasmic side. A helical transmembrane segment spans residues 238–258 (FSTCSAHLTVVIIFYGTIFFM). Over 259–277 (YAKPESKASVDSGNEDIIE) the chain is Extracellular. The helical transmembrane segment at 278–298 (ALISLFYGVMTPMLNPLIYSL) threads the bilayer. Topologically, residues 299–320 (RNKDVKAAVKNILCRKNFSDGK) are cytoplasmic.

It belongs to the G-protein coupled receptor 1 family.

The protein resides in the cell membrane. Functionally, odorant receptor. The protein is Olfactory receptor 13C8 (OR13C8) of Homo sapiens (Human).